The primary structure comprises 604 residues: Membrane protein insertase YidC (604 aa).

The helical transmembrane segment at 8–28 threads the bilayer; sequence LYLAIGLSLLVLIGWNYFFAG. The interval 42–84 is disordered; sequence EQQAQTQTTSDTTARSDLNVPGQRSLPGESPQTQLSRPEALAA. Residues 43–58 show a composition bias toward low complexity; that stretch reads QQAQTQTTSDTTARSD. Transmembrane regions (helical) follow at residues 349 to 369, 375 to 395, 449 to 469, 507 to 527, and 546 to 566; these read FDLL…FWIL, VVGN…AVFF, LPML…FVTI, MIGH…SMFF, and WMPV…VIYW.

The protein belongs to the OXA1/ALB3/YidC family. Type 1 subfamily. In terms of assembly, interacts with the Sec translocase complex via SecD. Specifically interacts with transmembrane segments of nascent integral membrane proteins during membrane integration.

The protein resides in the cell inner membrane. Required for the insertion and/or proper folding and/or complex formation of integral membrane proteins into the membrane. Involved in integration of membrane proteins that insert both dependently and independently of the Sec translocase complex, as well as at least some lipoproteins. Aids folding of multispanning membrane proteins. The sequence is that of Membrane protein insertase YidC from Beijerinckia indica subsp. indica (strain ATCC 9039 / DSM 1715 / NCIMB 8712).